A 591-amino-acid polypeptide reads, in one-letter code: Aspartate--tRNA(Asp/Asn) ligase (591 aa).

L-aspartate is bound at residue glutamate 176. Positions 200 to 203 are aspartate; the sequence is QLFK. An L-aspartate-binding site is contributed by arginine 222. ATP is bound by residues 222–224 and glutamine 231; that span reads RDE. Histidine 450 lines the L-aspartate pocket. Glutamate 484 lines the ATP pocket. Position 491 (arginine 491) interacts with L-aspartate. ATP is bound at residue 536–539; it reads GLDR.

Belongs to the class-II aminoacyl-tRNA synthetase family. Type 1 subfamily. In terms of assembly, homodimer.

The protein localises to the cytoplasm. The enzyme catalyses tRNA(Asx) + L-aspartate + ATP = L-aspartyl-tRNA(Asx) + AMP + diphosphate. In terms of biological role, aspartyl-tRNA synthetase with relaxed tRNA specificity since it is able to aspartylate not only its cognate tRNA(Asp) but also tRNA(Asn). Reaction proceeds in two steps: L-aspartate is first activated by ATP to form Asp-AMP and then transferred to the acceptor end of tRNA(Asp/Asn). In Bacillus cereus (strain G9842), this protein is Aspartate--tRNA(Asp/Asn) ligase.